A 387-amino-acid polypeptide reads, in one-letter code: UPF0400 protein C337.03 (387 aa).

The CID domain maps to 1-133; it reads MALTPDTVSS…SLQERFNNAE (133 aa). Residues 177–255 adopt a coiled-coil conformation; it reads KSYLEKQSDY…IISNLENKES (79 aa). Residues 257–387 form a disordered region; the sequence is TATSTLTDAG…SSAAGLYGDS (131 aa). The span at 283–297 shows a compositional bias: low complexity; the sequence is SPPSSSPNSDDAYSP. Residues 298–323 show a composition bias toward polar residues; sequence QVDSYSPSINSVPYTSNIVENPSEDN. Residues 353-365 show a composition bias toward acidic residues; that stretch reads NEEESKELPEDSD. Over residues 370–379 the composition is skewed to low complexity; it reads DSSPSSDDSS. S372 bears the Phosphoserine mark.

It belongs to the UPF0400 (RTT103) family.

This is UPF0400 protein C337.03 from Schizosaccharomyces pombe (strain 972 / ATCC 24843) (Fission yeast).